The sequence spans 89 residues: Neuropeptide F (89 aa).

The signal sequence occupies residues M1–A29. Position 61 is a phenylalanine amide (F61). A propeptide spanning residues G65 to R89 is cleaved from the precursor.

This sequence belongs to the NPY family.

It is found in the secreted. An integral part of the sensory system that mediates food signaling, providing the neural basis for the regulation of food response; coordinates larval foraging and social behavior changes during development. May have a hormonal role in females. The polypeptide is Neuropeptide F (Anopheles gambiae (African malaria mosquito)).